Here is a 125-residue protein sequence, read N- to C-terminus: Basic leucine zipper transcriptional factor ATF-like (125 aa).

Positions 1–14 are enriched in low complexity; sequence MPHSSDSSDSSFSR. The segment at 1–58 is disordered; it reads MPHSSDSSDSSFSRSPPPGKQDSSDDVRKVQRREKNRIAAQKSRQRQTQKADTLHLES. Residues 26-89 form the bZIP domain; sequence DVRKVQRREK…KYFTSVLSSH (64 aa). Residues 28-50 form a basic motif region; that stretch reads RKVQRREKNRIAAQKSRQRQTQK. Residue S43 is modified to Phosphoserine. Residue T48 is modified to Phosphothreonine. Residues 54–75 are leucine-zipper; the sequence is LHLESEDLEKQNAALRKEIKQL.

This sequence belongs to the bZIP family. As to quaternary structure, heterodimer; mainly heterodimerizes with JUNB. The BATF-JUNB heterodimer interacts with IRF4 and IRF8. Interacts (via bZIP domain) with IRF4 and IRF8; the interaction is direct. Also forms heterodimers with JUN and JUND. Interacts with IFI35. Phosphorylated on serine and threonine residues and at least one tyrosine residue. Phosphorylation at Ser-43 inhibit DNA binding activity and transforms it as a negative regulator of AP-1 mediated transcription.

The protein resides in the nucleus. It is found in the cytoplasm. Functionally, AP-1 family transcription factor that controls the differentiation of lineage-specific cells in the immune system: specifically mediates the differentiation of T-helper 17 cells (Th17), follicular T-helper cells (TfH), CD8(+) dendritic cells and class-switch recombination (CSR) in B-cells. Acts via the formation of a heterodimer with JUNB that recognizes and binds DNA sequence 5'-TGA[CG]TCA-3'. The BATF-JUNB heterodimer also forms a complex with IRF4 (or IRF8) in immune cells, leading to recognition of AICE sequence (5'-TGAnTCA/GAAA-3'), an immune-specific regulatory element, followed by cooperative binding of BATF and IRF4 (or IRF8) and activation of genes. Controls differentiation of T-helper cells producing interleukin-17 (Th17 cells) by binding to Th17-associated gene promoters: regulates expression of the transcription factor RORC itself and RORC target genes such as IL17 (IL17A or IL17B). Also involved in differentiation of follicular T-helper cells (TfH) by directing expression of BCL6 and MAF. In B-cells, involved in class-switch recombination (CSR) by controlling the expression of both AICDA and of germline transcripts of the intervening heavy-chain region and constant heavy-chain region (I(H)-C(H)). Following infection, can participate in CD8(+) dendritic cell differentiation via interaction with IRF4 and IRF8 to mediate cooperative gene activation. Regulates effector CD8(+) T-cell differentiation by regulating expression of SIRT1. Following DNA damage, part of a differentiation checkpoint that limits self-renewal of hematopoietic stem cells (HSCs): up-regulated by STAT3, leading to differentiation of HSCs, thereby restricting self-renewal of HSCs. In Bos taurus (Bovine), this protein is Basic leucine zipper transcriptional factor ATF-like (BATF).